A 74-amino-acid polypeptide reads, in one-letter code: Conotoxin AbVIA (74 aa).

A signal peptide spans 1–17; sequence VLIIAVLFLTACQLTTA. A propeptide spanning residues 18-38 is cleaved from the precursor; the sequence is VTSSRGEQKHRALRSTDKKFK. Cystine bridges form between Cys43/Cys57, Cys50/Cys61, and Cys56/Cys68. Ser73 carries the serine amide modification.

This sequence belongs to the conotoxin O1 superfamily. Expressed by the venom duct.

It localises to the secreted. In Conus abbreviatus (Abbreviated cone), this protein is Conotoxin AbVIA.